An 89-amino-acid polypeptide reads, in one-letter code: Mu-theraphotoxin-Phlo1a (89 aa).

The first 22 residues, 1–22, serve as a signal peptide directing secretion; sequence MKVSVLITLAVLGVMFVWTSAA. Positions 23–52 are excised as a propeptide; that stretch reads EQEDHGSDRRDSPALLKNLLGEEVFQSEER. Disulfide bonds link Cys54–Cys68, Cys61–Cys73, and Cys67–Cys81. An Isoleucine amide modification is found at Ile87.

Belongs to the neurotoxin 10 (Hwtx-1) family. 39 (Jztx-34) subfamily. In terms of tissue distribution, expressed by the venom gland.

Its subcellular location is the secreted. Gating-modifier toxin that inhibits voltage-gated sodium channel Nav by shifting the threshold for channel activation to more positive potentials. This toxin moderately inhibits human Nav1.7/SCN9A (IC(50)=459 nM) and weakly inhibits hNav1.2/SCN2A and hNav1.5/SCN5A (&lt;20% inhibition at 1 uM peptide). Inhibition of Nav1.7 is voltage-dependent, with lower inhibition at more positive test pulses. The protein is Mu-theraphotoxin-Phlo1a of Phlogius sp. (Tarantula spider).